A 378-amino-acid chain; its full sequence is MITVSNTVENLERLSDEGVSIWLDDLSRKRITSGNLAELIAHKHVVGVTTNPSIFQAAIGSGEGYEEQLADLAVRGVTVDEAVRMMTTADVRAAADILRPVYDATGGRDGRVSIEVDPRLAHDTEATIAEAKQLAWLVDRPNVMIKIPATKAGLPAITEVIGLGISVNVTLIFSLERYREVMDAYLAGLERAQAAGIDLAGIHSVASFFVSRVDSEIDKRLAKAGTDDAQALKGKAALANARLAYEAYEEVFAGERWTALAPAGAHKQRPLWASTGVKDPAYKDTLYVDELVAPGTVNTMPEGTLNATADHGDIHGDTVTGGYAQARADLAAVERLGISYDEVVKQLEDEAVAKFEVAWGDLLEAVATSLRGKGADGE.

Lys-146 (schiff-base intermediate with substrate) is an active-site residue.

This sequence belongs to the transaldolase family. Type 2 subfamily.

The protein localises to the cytoplasm. The catalysed reaction is D-sedoheptulose 7-phosphate + D-glyceraldehyde 3-phosphate = D-erythrose 4-phosphate + beta-D-fructose 6-phosphate. It functions in the pathway carbohydrate degradation; pentose phosphate pathway; D-glyceraldehyde 3-phosphate and beta-D-fructose 6-phosphate from D-ribose 5-phosphate and D-xylulose 5-phosphate (non-oxidative stage): step 2/3. Functionally, transaldolase is important for the balance of metabolites in the pentose-phosphate pathway. This Streptomyces avermitilis (strain ATCC 31267 / DSM 46492 / JCM 5070 / NBRC 14893 / NCIMB 12804 / NRRL 8165 / MA-4680) protein is Transaldolase 1.